Consider the following 601-residue polypeptide: MTASAWGLLALFLSVLGLLAWPLGRGLAAVCDGRLPGWMHRAEAPLYRLAGVRPEAGMHWRHYALALLAFNALGVFAVYALQRLQGVLPLNPQGLPAVAGDSAFNTAVSFVSNTNWQGYAGESTMGYLVQMLGLSVQNFLSAATGIAVAFALARGFAARGGDGAGHVGNFWADIVRITAWVLVPLSFVLAVFLAGQGVIQNFTAYQDVATVEATVYQDPQSDAQGQPLKDASGNPLTREVRTRTQTLPMGPVASQEAIKMLGTNGGGFFNANSAHPYENPTPLTNLAQMLAIFLVPAALCFAFGRVVGDWRQGVAILAAMTLMFVVAVVAVTAAEQAGNPALSALGADPVASALQAGGNMEGKEVRFGISASALFAAVTTAASCGAVNAMHDSFTPLGGMVPMVLMQLGEVVFGGAGSGLYGMLVFAILAVFIAGLMIGRTPEYLGKKIEVREMKLTSVAILVTPLLVLVGTAVAVLAPAGQAGIANPGAHGFSEVLYALTSAANNNGSAFAGLSANTPFYNVLLALAMWFGRFGVIVPVLAIAGSLAAKKRLPPGPGTMPTHGPLFVALLVFTVLLVGLLNYVPSLALGPVVEHLVLQAR.

12 helical membrane-spanning segments follow: residues 3–23 (ASAWGLLALFLSVLGLLAWPL), 62–82 (HYALALLAFNALGVFAVYALQ), 132–152 (LGLSVQNFLSAATGIAVAFAL), 179–199 (AWVLVPLSFVLAVFLAGQGVI), 283–303 (LTNLAQMLAIFLVPAALCFAF), 314–334 (VAILAAMTLMFVVAVVAVTAA), 367–387 (FGISASALFAAVTTAASCGAV), 397–417 (LGGMVPMVLMQLGEVVFGGAG), 419–439 (GLYGMLVFAILAVFIAGLMIG), 459–479 (VAILVTPLLVLVGTAVAVLAP), 523–543 (VLLALAMWFGRFGVIVPVLAI), and 564–584 (GPLFVALLVFTVLLVGLLNYV).

This sequence belongs to the KdpA family. As to quaternary structure, the system is composed of three essential subunits: KdpA, KdpB and KdpC.

The protein localises to the cell inner membrane. Part of the high-affinity ATP-driven potassium transport (or Kdp) system, which catalyzes the hydrolysis of ATP coupled with the electrogenic transport of potassium into the cytoplasm. This subunit binds the periplasmic potassium ions and delivers the ions to the membrane domain of KdpB through an intramembrane tunnel. This Paracidovorax citrulli (strain AAC00-1) (Acidovorax citrulli) protein is Potassium-transporting ATPase potassium-binding subunit.